A 516-amino-acid chain; its full sequence is Putative Rieske 2Fe-2S iron-sulfur protein MT3926 (516 aa).

Residues 429 to 516 (LYTFFKCLTD…RGHQLRSSRP (88 aa)) form the Rieske domain. [2Fe-2S] cluster-binding residues include Cys469, His471, Cys489, and His492.

It depends on [2Fe-2S] cluster as a cofactor.

This is Putative Rieske 2Fe-2S iron-sulfur protein MT3926 from Mycobacterium tuberculosis (strain CDC 1551 / Oshkosh).